A 549-amino-acid chain; its full sequence is Glucose-6-phosphate isomerase (549 aa).

Catalysis depends on Glu355, which acts as the Proton donor. Catalysis depends on residues His386 and Lys514.

This sequence belongs to the GPI family.

Its subcellular location is the cytoplasm. It catalyses the reaction alpha-D-glucose 6-phosphate = beta-D-fructose 6-phosphate. The protein operates within carbohydrate biosynthesis; gluconeogenesis. Its pathway is carbohydrate degradation; glycolysis; D-glyceraldehyde 3-phosphate and glycerone phosphate from D-glucose: step 2/4. Catalyzes the reversible isomerization of glucose-6-phosphate to fructose-6-phosphate. This is Glucose-6-phosphate isomerase from Sodalis glossinidius (strain morsitans).